The sequence spans 242 residues: Probable transcriptional regulatory protein NGO_1291 (242 aa).

It belongs to the TACO1 family.

It localises to the cytoplasm. The polypeptide is Probable transcriptional regulatory protein NGO_1291 (Neisseria gonorrhoeae (strain ATCC 700825 / FA 1090)).